The following is a 130-amino-acid chain: MIYGIGTDICDVRRIRASLARHGDRFAEKVLADGELATWRARSARWPERGVRYLATRFSAKEAFSKAIGLGLHMPMTWRHCEVANLPSGQPTIVLHGALQDWFAARGLRCHLSVTDESDYAASFCVVEKD.

Positions 8 and 62 each coordinate Mg(2+).

It belongs to the P-Pant transferase superfamily. AcpS family. It depends on Mg(2+) as a cofactor.

Its subcellular location is the cytoplasm. It carries out the reaction apo-[ACP] + CoA = holo-[ACP] + adenosine 3',5'-bisphosphate + H(+). In terms of biological role, transfers the 4'-phosphopantetheine moiety from coenzyme A to a Ser of acyl-carrier-protein. The protein is Holo-[acyl-carrier-protein] synthase of Acidovorax ebreus (strain TPSY) (Diaphorobacter sp. (strain TPSY)).